Reading from the N-terminus, the 110-residue chain is NADH-quinone oxidoreductase subunit K (110 aa).

The next 3 helical transmembrane spans lie at Val14 to Val34, Ile39 to Ile59, and Ile70 to Ile90.

The protein belongs to the complex I subunit 4L family. NDH-1 is composed of 14 different subunits. Subunits NuoA, H, J, K, L, M, N constitute the membrane sector of the complex.

Its subcellular location is the cell inner membrane. It carries out the reaction a quinone + NADH + 5 H(+)(in) = a quinol + NAD(+) + 4 H(+)(out). In terms of biological role, NDH-1 shuttles electrons from NADH, via FMN and iron-sulfur (Fe-S) centers, to quinones in the respiratory chain. The immediate electron acceptor for the enzyme in this species is believed to be ubiquinone. Couples the redox reaction to proton translocation (for every two electrons transferred, four hydrogen ions are translocated across the cytoplasmic membrane), and thus conserves the redox energy in a proton gradient. This is NADH-quinone oxidoreductase subunit K from Hydrogenobaculum sp. (strain Y04AAS1).